Reading from the N-terminus, the 335-residue chain is Serpentine receptor class alpha-13 (335 aa).

At 1 to 25 (MAIISSVNRTCASESLLELYRSYKY) the chain is on the extracellular side. Residues 26-46 (ILSTSFNIIIPIISLFFLVYA) form a helical membrane-spanning segment. Over 47 to 61 (IKQLCAQSIIQYSTR) the chain is Cytoplasmic. Residues 62-82 (VLLITTILFAVCHQIAYFCFK) form a helical membrane-spanning segment. Topologically, residues 83–108 (ADLLYTMLFKLDQPCNLQHSSYDCRF) are extracellular. Residues 109–129 (ITIATTTSNCGMALVQLAMSI) traverse the membrane as a helical segment. Over 130 to 146 (DRVFALKFNRVYYKLKS) the chain is Cytoplasmic. The chain crosses the membrane as a helical span at residues 147-167 (IPGITLALITLSISFSMFFIL). Over 168–192 (TIDDPLSGYVNHCGFYPTYSQDKFH) the chain is Extracellular. The helical transmembrane segment at 193 to 213 (IFLDVTLYLAVFNFVFDIGLM) threads the bilayer. At 214-243 (YYSYQEILWKRSYSFVNRFQSRISLKCTQA) the chain is on the cytoplasmic side. The helical transmembrane segment at 244–264 (IFIISICQCISNVLYSGLLSL) threads the bilayer. The Extracellular portion of the chain corresponds to 265–278 (LMKLGRYMSSADYN). The chain crosses the membrane as a helical span at residues 279 to 299 (LSLSLAYTTPYSCLILPILIC). Topologically, residues 300-335 (KVLEYIKKQRTVGILSLRNQKQSMEGHMAMINSAWK) are cytoplasmic.

This sequence belongs to the nematode receptor-like protein sra family. Expressed in the AWA and AWC chemosensory neurons.

It localises to the membrane. Functionally, chemosensory receptor that negatively regulates RAS/MAPK signaling during vulva induction and the negative regulation of olfaction of volitile attractants. Required for the suppression of vulval induction in response to food starvation. Signaling acts through the GPA-5 G-alpha protein subunit. In Caenorhabditis elegans, this protein is Serpentine receptor class alpha-13 (sra-13).